The sequence spans 341 residues: Keratin-associated protein 29-1 (341 aa).

7 consecutive repeat copies span residues Cys5–Asn9, Cys115–Lys119, Cys120–Ser124, Cys150–Gly154, Cys240–Ser244, Cys276–Ala280, and Cys307–Gly311. Residues Cys5–Gly311 are 7 X 5 AA repeats of C-C-X(3).

This sequence belongs to the KRTAP type 10 family.

The protein is Keratin-associated protein 29-1 (KRTAP29-1) of Homo sapiens (Human).